We begin with the raw amino-acid sequence, 58 residues long: MSNTTRVRKNESLEDALRRFKRSVSKSGTLQEYRKREHYEKPSVKRKKKSEAARKRKF.

A disordered region spans residues 25 to 58 (SKSGTLQEYRKREHYEKPSVKRKKKSEAARKRKF). The span at 32–43 (EYRKREHYEKPS) shows a compositional bias: basic and acidic residues. A compositionally biased stretch (basic residues) spans 44–58 (VKRKKKSEAARKRKF).

Belongs to the bacterial ribosomal protein bS21 family.

This chain is Small ribosomal subunit protein bS21, found in Oceanobacillus iheyensis (strain DSM 14371 / CIP 107618 / JCM 11309 / KCTC 3954 / HTE831).